Here is a 321-residue protein sequence, read N- to C-terminus: 4-hydroxy-3-methylbut-2-enyl diphosphate reductase (321 aa).

Residue Cys12 participates in [4Fe-4S] cluster binding. His41 and His74 together coordinate (2E)-4-hydroxy-3-methylbut-2-enyl diphosphate. The dimethylallyl diphosphate site is built by His41 and His74. Isopentenyl diphosphate contacts are provided by His41 and His74. Cys96 provides a ligand contact to [4Fe-4S] cluster. Residue His124 participates in (2E)-4-hydroxy-3-methylbut-2-enyl diphosphate binding. Residue His124 participates in dimethylallyl diphosphate binding. Isopentenyl diphosphate is bound at residue His124. The active-site Proton donor is Glu126. Thr167 serves as a coordination point for (2E)-4-hydroxy-3-methylbut-2-enyl diphosphate. Cys197 provides a ligand contact to [4Fe-4S] cluster. Residues Ser225, Ser226, Asn227, and Ser269 each coordinate (2E)-4-hydroxy-3-methylbut-2-enyl diphosphate. Dimethylallyl diphosphate contacts are provided by Ser225, Ser226, Asn227, and Ser269. Residues Ser225, Ser226, Asn227, and Ser269 each coordinate isopentenyl diphosphate.

Belongs to the IspH family. Homodimer. [4Fe-4S] cluster serves as cofactor.

The catalysed reaction is isopentenyl diphosphate + 2 oxidized [2Fe-2S]-[ferredoxin] + H2O = (2E)-4-hydroxy-3-methylbut-2-enyl diphosphate + 2 reduced [2Fe-2S]-[ferredoxin] + 2 H(+). The enzyme catalyses dimethylallyl diphosphate + 2 oxidized [2Fe-2S]-[ferredoxin] + H2O = (2E)-4-hydroxy-3-methylbut-2-enyl diphosphate + 2 reduced [2Fe-2S]-[ferredoxin] + 2 H(+). It functions in the pathway isoprenoid biosynthesis; dimethylallyl diphosphate biosynthesis; dimethylallyl diphosphate from (2E)-4-hydroxy-3-methylbutenyl diphosphate: step 1/1. It participates in isoprenoid biosynthesis; isopentenyl diphosphate biosynthesis via DXP pathway; isopentenyl diphosphate from 1-deoxy-D-xylulose 5-phosphate: step 6/6. In terms of biological role, catalyzes the conversion of 1-hydroxy-2-methyl-2-(E)-butenyl 4-diphosphate (HMBPP) into a mixture of isopentenyl diphosphate (IPP) and dimethylallyl diphosphate (DMAPP). Acts in the terminal step of the DOXP/MEP pathway for isoprenoid precursor biosynthesis. The polypeptide is 4-hydroxy-3-methylbut-2-enyl diphosphate reductase (Escherichia coli O6:K15:H31 (strain 536 / UPEC)).